A 287-amino-acid polypeptide reads, in one-letter code: Large ribosomal subunit protein uL2 (287 aa).

The interval 220–287 is disordered; it reads VRGSVMNPCD…SKRSRGGRDS (68 aa). A compositionally biased stretch (basic residues) spans 271–287; that stretch reads VRRRRRISKRSRGGRDS.

This sequence belongs to the universal ribosomal protein uL2 family. In terms of assembly, part of the 50S ribosomal subunit. Forms a bridge to the 30S subunit in the 70S ribosome.

In terms of biological role, one of the primary rRNA binding proteins. Required for association of the 30S and 50S subunits to form the 70S ribosome, for tRNA binding and peptide bond formation. It has been suggested to have peptidyltransferase activity; this is somewhat controversial. Makes several contacts with the 16S rRNA in the 70S ribosome. This chain is Large ribosomal subunit protein uL2, found in Prochlorococcus marinus (strain MIT 9515).